Consider the following 171-residue polypeptide: Mitoferrin-1 (171 aa).

The tract at residues 1–40 (MELRRGGVGSQARARRMDGDSRDGGGGCKDAGSEDYENLP) is disordered. The Solcar repeat unit spans residues 43-131 (ASLSTHMTAG…FACYENMKRT (89 aa)). Transmembrane regions (helical) follow at residues 45-64 (LSTH…SVMY), 105-125 (RGLN…FACY), and 143-163 (HLAN…PSTD).

It belongs to the mitochondrial carrier (TC 2.A.29) family. Interacts with ACB10; this interaction stabilizes SLC25A37 and enhances the function of SLC25A37 to import mitochondrial iron during erythroid differentiation.

The protein resides in the mitochondrion inner membrane. It catalyses the reaction Fe(2+)(in) = Fe(2+)(out). In terms of biological role, mitochondrial iron transporter that specifically mediates iron uptake in developing erythroid cells, thereby playing an essential role in heme biosynthesis. This chain is Mitoferrin-1 (SLC25A37), found in Bos taurus (Bovine).